Here is a 336-residue protein sequence, read N- to C-terminus: MMQDLRLILIVVGAIAIIALLLHGLWTSRKERSSLFRDRPVKRAKKARDETPLDELDEGVGEVRVKGARSQQNEPSFSSSSFDNASFDNHSAREELRSEATSPFEHLSPASSYDPLLDEATPVDSPRSQVRGDSNPQVVNPRETPIQPSIDTPRESFAYDAPPSAPQQPAAHSLHEKVQPAPAQPQQPAEPVEPVAAKEAVLVLHVVAHQGGVIGGELLLQSLLQAGFQFGEMNIFHRHVNPAGAGPVLFSLANMVKPGSFNVDAMSEFSTPGVSIFMMVPSYGDASQNFKLMLQSAQRIADDVGGVVQDDERRMMTPQKVESYKARIRDVLKANA.

The Periplasmic portion of the chain corresponds to 1–6 (MMQDLR). A helical membrane pass occupies residues 7–27 (LILIVVGAIAIIALLLHGLWT). Topologically, residues 28-336 (SRKERSSLFR…RIRDVLKANA (309 aa)) are cytoplasmic. The segment covering 40–51 (PVKRAKKARDET) has biased composition (basic and acidic residues). The segment at 40–190 (PVKRAKKARD…APAQPQQPAE (151 aa)) is disordered. A compositionally biased stretch (low complexity) spans 76–89 (SFSSSSFDNASFDN). Over residues 126–138 (PRSQVRGDSNPQV) the composition is skewed to polar residues. Residues 179 to 190 (QPAPAQPQQPAE) are compositionally biased toward low complexity.

The protein belongs to the ZipA family. As to quaternary structure, interacts with FtsZ via their C-terminal domains.

Its subcellular location is the cell inner membrane. Functionally, essential cell division protein that stabilizes the FtsZ protofilaments by cross-linking them and that serves as a cytoplasmic membrane anchor for the Z ring. Also required for the recruitment to the septal ring of downstream cell division proteins. The chain is Cell division protein ZipA from Pectobacterium carotovorum subsp. carotovorum (strain PC1).